The primary structure comprises 295 residues: Ribosomal protein L11 methyltransferase (295 aa).

Positions 146, 167, 189, and 231 each coordinate S-adenosyl-L-methionine.

It belongs to the methyltransferase superfamily. PrmA family.

Its subcellular location is the cytoplasm. It carries out the reaction L-lysyl-[protein] + 3 S-adenosyl-L-methionine = N(6),N(6),N(6)-trimethyl-L-lysyl-[protein] + 3 S-adenosyl-L-homocysteine + 3 H(+). Functionally, methylates ribosomal protein L11. In Vibrio cholerae serotype O1 (strain M66-2), this protein is Ribosomal protein L11 methyltransferase.